Consider the following 495-residue polypeptide: MPQQTAVVVLAAGAGTRMRSKTPKVLHSLAGRSMLAHALHAANEIDPTHLITVVGHDREQVGAAVAAVAGELGREIVPALQEQQLGTGHAVQCALRALPADFAGDLLVTSADVPLLDGHTLGALLDEHRSYQERSAVTVLTFVPDDPNGYGRIVRDADGQVVEIVEHADATPEQAAITEVNSGVYAFDATVLRAMIGRLSTANAQHELYLTDVLRLAREAGHPVHGARLLDAAKVTGVNDRVQLSIATRTMNRYILERHMRAGVTIIDPASTWVDAGVRIGRDAVLRPGVQLLGSTVIGEDAEIGPDSTLTDVRVGDGAKVVRTHGEGATIGPNASVGPFAYLRPGTILGEAGKLGAFVETKNADIGAHSKVPHLTYVGDATIGEHSNIGASSVFVNYDGVKKHHTVVGSHVRTGSDTMFVAPVTVGDGAYTAAGTVLRRNVPPGALAVSGGPQKNIENWVQRHRPGTAAATAAAQALAADEKSSQATEQKDGEQ.

A pyrophosphorylase region spans residues 1–241 (MPQQTAVVVL…AAKVTGVNDR (241 aa)). Residues 10-13 (LAAG), Lys24, Gln81, and 86-87 (GT) contribute to the UDP-N-acetyl-alpha-D-glucosamine site. Position 112 (Asp112) interacts with Mg(2+). UDP-N-acetyl-alpha-D-glucosamine-binding residues include Gly151, Glu166, Asn181, and Asn239. Asn239 is a binding site for Mg(2+). A linker region spans residues 242–262 (VQLSIATRTMNRYILERHMRA). Residues 263–495 (GVTIIDPAST…QATEQKDGEQ (233 aa)) are N-acetyltransferase. Positions 344 and 362 each coordinate UDP-N-acetyl-alpha-D-glucosamine. His374 functions as the Proton acceptor in the catalytic mechanism. Positions 377 and 388 each coordinate UDP-N-acetyl-alpha-D-glucosamine. Acetyl-CoA contacts are provided by residues Ala391, 397–398 (NY), Ser416, and Ala434. The segment at 467-495 (GTAAATAAAQALAADEKSSQATEQKDGEQ) is disordered. Over residues 468-479 (TAAATAAAQALA) the composition is skewed to low complexity. The span at 480–495 (ADEKSSQATEQKDGEQ) shows a compositional bias: basic and acidic residues.

The protein in the N-terminal section; belongs to the N-acetylglucosamine-1-phosphate uridyltransferase family. This sequence in the C-terminal section; belongs to the transferase hexapeptide repeat family. Homotrimer. Requires Mg(2+) as cofactor.

It is found in the cytoplasm. The catalysed reaction is alpha-D-glucosamine 1-phosphate + acetyl-CoA = N-acetyl-alpha-D-glucosamine 1-phosphate + CoA + H(+). It carries out the reaction N-acetyl-alpha-D-glucosamine 1-phosphate + UTP + H(+) = UDP-N-acetyl-alpha-D-glucosamine + diphosphate. It participates in nucleotide-sugar biosynthesis; UDP-N-acetyl-alpha-D-glucosamine biosynthesis; N-acetyl-alpha-D-glucosamine 1-phosphate from alpha-D-glucosamine 6-phosphate (route II): step 2/2. The protein operates within nucleotide-sugar biosynthesis; UDP-N-acetyl-alpha-D-glucosamine biosynthesis; UDP-N-acetyl-alpha-D-glucosamine from N-acetyl-alpha-D-glucosamine 1-phosphate: step 1/1. It functions in the pathway bacterial outer membrane biogenesis; LPS lipid A biosynthesis. In terms of biological role, catalyzes the last two sequential reactions in the de novo biosynthetic pathway for UDP-N-acetylglucosamine (UDP-GlcNAc). The C-terminal domain catalyzes the transfer of acetyl group from acetyl coenzyme A to glucosamine-1-phosphate (GlcN-1-P) to produce N-acetylglucosamine-1-phosphate (GlcNAc-1-P), which is converted into UDP-GlcNAc by the transfer of uridine 5-monophosphate (from uridine 5-triphosphate), a reaction catalyzed by the N-terminal domain. The chain is Bifunctional protein GlmU from Nocardia farcinica (strain IFM 10152).